A 653-amino-acid chain; its full sequence is Epithelial sodium channel subunit gamma (653 aa).

The Cytoplasmic segment spans residues 1–55 (MAPGEKIKAKIKKNLPVKGPQAPTIKELMRWYCLNTNTHGCRRIVVSPGRLRRLL). The chain crosses the membrane as a helical span at residues 56-76 (WIAFTLTAVGLIFWQCALLVF). Topologically, residues 77–538 (SFYTVSVSIK…EMLLSNFGGQ (462 aa)) are extracellular. Disulfide bonds link Cys100-Cys287, Cys211-Cys218, Cys264-Cys271, Cys376-Cys461, Cys398-Cys457, Cys402-Cys453, Cys411-Cys438, and Cys413-Cys427. The tract at residues 137 to 225 (RKQRDTESWS…SDCATYTFSS (89 aa)) is gating release of inhibition by proteolysis (GRIP); protease-sensitive region that is responsible for the proteolytic activation of the channel. Asn213 carries N-linked (GlcNAc...) asparagine glycosylation. The N-linked (GlcNAc...) asparagine glycan is linked to Asn275. N-linked (GlcNAc...) asparagine glycosylation occurs at Asn501. Residues 539-559 (LGLWMSCSVVCVIEIIEVFFI) form a helical membrane-spanning segment. At 560–653 (DSLSIVTRRQ…LADTRLPDEP (94 aa)) the chain is on the cytoplasmic side. The interval 582–632 (AAPSAEAPSGAQGQENPALEIDDDLPTFTSALSLPPAPGAQVPGTPPPRYN) is disordered. The PY motif; recruits WW domain-containing proteins and is thereby required for ubiquitination and inhibition of the channel by NEDD4 and NEDD4L motif lies at 627 to 631 (PPPRY).

Belongs to the amiloride-sensitive sodium channel (TC 1.A.6) family. SCNN1G subfamily. As to quaternary structure, component of the heterotrimeric epithelial sodium channel (ENaC) composed of an alpha/SCNN1A, a beta/SCNN1B and a gamma/SCNN1G subunit. Interacts with WWP1 (via WW domains). Interacts with WWP2 (via WW domains); inhibits the channel. Interacts with the full-length immature form of PCSK9 (pro-PCSK9); inhibits ENaC by promoting its proteasomal degradation. Interacts with BPIFA1; the interaction is indirect via SCNN1B and inhibits the proteolytic maturation of SCNN1A and SCNN1G and the activation of ENaC. In terms of processing, phosphorylated on serine and threonine residues. Aldosterone and insulin increase the basal level of phosphorylation. Ubiquitinated. Can be ubiquitinated at multiple sites and undergo monoubiquitination and polyubiquitination. Ubiquitination by NEDD4 or NEDD4L inhibits the ENaC channel through endocytosis, intracellular retention and degradation of its individual subunits. Post-translationally, ENaC is activated through the proteolytic maturation of its subunits. Furin cleaves the SCNN1G subunit first, followed by cleavage by prostasin (PRSS8), which results in a stepwise increase in the open probability of the channel due to the release of an inhibitory tract. BPIFA1, which is recruited by the SCNN1B subunit, prevents the proteolytic activation of ENaC. In terms of processing, N-glycosylated. N-linked glycans are processed to complex type during ENaC complex assembly and transport to the plasma membrane.

It localises to the apical cell membrane. The catalysed reaction is Na(+)(in) = Na(+)(out). With respect to regulation, originally identified and characterized by its inhibition by the diuretic drug amiloride. This is one of the three pore-forming subunits of the heterotrimeric epithelial sodium channel (ENaC), a critical regulator of sodium balance and fluid homeostasis. ENaC operates in epithelial tissues, where it mediates the electrodiffusion of sodium ions from extracellular fluid through the apical membrane of cells, with water following osmotically. It plays a key role in maintaining sodium homeostasis through electrogenic sodium reabsorption in the kidneys. Additionally, ENaC is essential for airway surface liquid homeostasis, which is crucial for proper mucus clearance. The protein is Epithelial sodium channel subunit gamma of Oryctolagus cuniculus (Rabbit).